Reading from the N-terminus, the 553-residue chain is Arginine--tRNA ligase (553 aa).

A 'HIGH' region motif is present at residues 130–140; that stretch reads ANPTGPIHLGG.

This sequence belongs to the class-I aminoacyl-tRNA synthetase family. As to quaternary structure, monomer.

Its subcellular location is the cytoplasm. The catalysed reaction is tRNA(Arg) + L-arginine + ATP = L-arginyl-tRNA(Arg) + AMP + diphosphate. This is Arginine--tRNA ligase from Corynebacterium aurimucosum (strain ATCC 700975 / DSM 44827 / CIP 107346 / CN-1) (Corynebacterium nigricans).